Consider the following 662-residue polypeptide: UvrABC system protein B (662 aa).

The region spanning 31–188 (DNIEGGEKAQ…NDLVDIQFER (158 aa)) is the Helicase ATP-binding domain. 44–51 (GATGTGKT) contacts ATP. The short motif at 97-120 (YYDYYQPEAYVPSSDTYIEKDSSV) is the Beta-hairpin element. The Helicase C-terminal domain maps to 435-601 (QIDDLLGEIN…TIKKEIRDLI (167 aa)). In terms of domain architecture, UVR spans 626 to 661 (KDMIKKLEGQMQEAAGLLDFELAAQIRDMILEIKAM).

It belongs to the UvrB family. In terms of assembly, forms a heterotetramer with UvrA during the search for lesions. Interacts with UvrC in an incision complex.

Its subcellular location is the cytoplasm. In terms of biological role, the UvrABC repair system catalyzes the recognition and processing of DNA lesions. A damage recognition complex composed of 2 UvrA and 2 UvrB subunits scans DNA for abnormalities. Upon binding of the UvrA(2)B(2) complex to a putative damaged site, the DNA wraps around one UvrB monomer. DNA wrap is dependent on ATP binding by UvrB and probably causes local melting of the DNA helix, facilitating insertion of UvrB beta-hairpin between the DNA strands. Then UvrB probes one DNA strand for the presence of a lesion. If a lesion is found the UvrA subunits dissociate and the UvrB-DNA preincision complex is formed. This complex is subsequently bound by UvrC and the second UvrB is released. If no lesion is found, the DNA wraps around the other UvrB subunit that will check the other stand for damage. The chain is UvrABC system protein B from Streptococcus sanguinis (strain SK36).